Reading from the N-terminus, the 878-residue chain is Alanine--tRNA ligase (878 aa).

Residues His-568, His-572, Cys-670, and His-674 each contribute to the Zn(2+) site.

The protein belongs to the class-II aminoacyl-tRNA synthetase family. Zn(2+) is required as a cofactor.

The protein resides in the cytoplasm. The catalysed reaction is tRNA(Ala) + L-alanine + ATP = L-alanyl-tRNA(Ala) + AMP + diphosphate. Catalyzes the attachment of alanine to tRNA(Ala) in a two-step reaction: alanine is first activated by ATP to form Ala-AMP and then transferred to the acceptor end of tRNA(Ala). Also edits incorrectly charged Ser-tRNA(Ala) and Gly-tRNA(Ala) via its editing domain. The sequence is that of Alanine--tRNA ligase from Latilactobacillus sakei subsp. sakei (strain 23K) (Lactobacillus sakei subsp. sakei).